A 45-amino-acid chain; its full sequence is Thymosin beta-15A homolog (45 aa).

The interval 19–45 is disordered; the sequence is KKTNTEEKNTLPSKETIEQEKECVKSS. The span at 21–45 shows a compositional bias: basic and acidic residues; it reads TNTEEKNTLPSKETIEQEKECVKSS.

The protein belongs to the thymosin beta family.

It localises to the cytoplasm. It is found in the cytoskeleton. Plays an important role in the organization of the cytoskeleton. Binds to and sequesters actin monomers (G actin) and therefore inhibits actin polymerization. The sequence is that of Thymosin beta-15A homolog from Coturnix japonica (Japanese quail).